The sequence spans 1090 residues: Leucine-rich repeat receptor-like serine/threonine-protein kinase RGI4 (1090 aa).

Residues 1-20 (MPRNPRFCFFLFLLFHSSLF) form the signal peptide. The Extracellular segment spans residues 21 to 702 (FSIPCFSIDE…IQTRHRSAVK (682 aa)). One copy of the LRR 1 repeat lies at 36 to 59 (LSWKSQLNISGDALSSWKASESNP). N-linked (GlcNAc...) asparagine glycosylation occurs at Asn43. Cysteines 60 and 67 form a disulfide. LRR repeat units lie at residues 95-119 (IKSL…LGDL), 120-143 (SELE…IFKL), 145-166 (KLKI…ELGN), and 168-191 (VNLI…IGEL). Asn107 is a glycosylation site (N-linked (GlcNAc...) asparagine). 4 consecutive short sequence motifs (small peptide recognition) follow at residues 176–177 (FD), 198–201 (RAGG), 221–226 (TLGLAE), and Tyr249. LRR repeat units lie at residues 216 to 240 (CESL…IGNL), 242 to 264 (KVQT…IGNC), 265 to 288 (TELQ…MGRL), 289 to 312 (KKLQ…LGTC), 314 to 335 (ELFL…SFGN), 336 to 360 (LPNL…LANC), and 362 to 386 (KLTH…KLTS). The N-linked (GlcNAc...) asparagine glycan is linked to Asn263. Residues 269–273 (NLYLY) carry the CLE45 peptide binding motif. The Small peptide recognition signature appears at 271-273 (YLY). 2 short sequence motifs (small peptide recognition) span residues 319–322 (DLSE) and 341–343 (ELQ). An N-linked (GlcNAc...) asparagine glycan is attached at Asn359. 2 short sequence motifs (small peptide recognition) span residues 389–393 (MFFAW) and 415–418 (DLSY). LRR repeat units lie at residues 408–432 (CQEL…IFEI), 434–456 (NLTK…IGNC), 457–480 (TNLY…IGNL), 481–504 (KNLN…ISGC), 506–526 (SLEF…GTLP), 527–550 (KSLQ…IGSL), 551–574 (TELT…ISSC), 576–598 (SLQL…LGRI), 600–622 (SLAI…RFSS), 623–646 (LTNL…LADL), and 647–670 (QNLV…LFFR). Asn420 and Asn434 each carry an N-linked (GlcNAc...) asparagine glycan. A Small peptide recognition motif is present at residues 437-441 (KLLLL). Residue Asn455 is glycosylated (N-linked (GlcNAc...) asparagine). The short motif at 461–463 (RLR) is the Small peptide recognition element. A glycan (N-linked (GlcNAc...) asparagine) is linked at Asn606. An N-linked (GlcNAc...) asparagine glycan is attached at Asn653. Residues 703–723 (VTMSILVAASVVLVLMAVYTL) traverse the membrane as a helical segment. At 724–1090 (VKAQRITGKQ…CSFAYSDESV (367 aa)) the chain is on the cytoplasmic side. The Protein kinase domain occupies 758-1040 (LTSANVIGTG…KDIVAMLKEI (283 aa)). ATP-binding positions include 764 to 772 (IGTGSSGVV) and Lys786. Tyr829 and Tyr869 each carry phosphotyrosine. Asp882 serves as the catalytic Proton acceptor. At Tyr932 the chain carries Phosphotyrosine. An LRR 24 repeat occupies 1037 to 1060 (LKEIRQFDMDRSESDMIKGGKCEK). Positions 1054-1079 (KGGKCEKWQPQPLPPEKIVSTPRGSS) are disordered.

Belongs to the protein kinase superfamily. Ser/Thr protein kinase family. In terms of assembly, self-interacts. Interacts with RGF1; this interaction triggers its phosphorylation and ubiquitination and the formation of heterodimers with SERK1. Post-translationally, autophosphorylated. Phosphorylated and ubiquitinated upon interaction with RGF1, thus leading to activation a subsequent degradation. In terms of tissue distribution, expressed in floers, pollen grains and stipules. Present in roots.

Its subcellular location is the cell membrane. It carries out the reaction L-seryl-[protein] + ATP = O-phospho-L-seryl-[protein] + ADP + H(+). The enzyme catalyses L-threonyl-[protein] + ATP = O-phospho-L-threonyl-[protein] + ADP + H(+). In terms of biological role, receptor with a serine/threonine-protein kinase activity. Together with SKM1, LRR-rich receptor-like kinase (LRR-RLK) required for male fertility by the perception of CLE43 and CLE45 peptides and the transduction of their promoting action in pollen tubes, especially under relatively high temperature (at 30 degrees Celsius), thus conferring tolerance against high temperature probably through the maintenance of mitochondrial activity. Seems to not be involved in the perception of CLE45 peptide in roots. Together with RGI1, RGI2, RGI3, RGI4 and RGI5, acts as receptor of RGF1, a peptide hormone that maintains the postembryonic root stem cell niche by regulating the expression levels and patterns of the transcription factor PLETHORA (PLT). Links RGF1 signal with its downstream components. The protein is Leucine-rich repeat receptor-like serine/threonine-protein kinase RGI4 of Arabidopsis thaliana (Mouse-ear cress).